Reading from the N-terminus, the 174-residue chain is Ribosome maturation factor RimM (174 aa).

Positions 96–169 (KDTFFICDLI…KMVVDLPQGL (74 aa)) constitute a PRC barrel domain.

It belongs to the RimM family. In terms of assembly, binds ribosomal protein uS19.

It is found in the cytoplasm. Functionally, an accessory protein needed during the final step in the assembly of 30S ribosomal subunit, possibly for assembly of the head region. Essential for efficient processing of 16S rRNA. May be needed both before and after RbfA during the maturation of 16S rRNA. It has affinity for free ribosomal 30S subunits but not for 70S ribosomes. The protein is Ribosome maturation factor RimM of Acetivibrio thermocellus (strain ATCC 27405 / DSM 1237 / JCM 9322 / NBRC 103400 / NCIMB 10682 / NRRL B-4536 / VPI 7372) (Clostridium thermocellum).